The primary structure comprises 178 residues: Hypoxanthine phosphoribosyltransferase (178 aa).

Diphosphate-binding residues include Arg-43 and Gly-44. Glu-99 is a binding site for GMP. Residue Glu-99 participates in IMP binding. Positions 99 and 100 each coordinate Mg(2+). Asp-103 functions as the Proton acceptor in the catalytic mechanism. Residues 103-108 (DSGNTL), Lys-131, and Asp-159 contribute to the GMP site. Residues 103–108 (DSGNTL) and Lys-131 each bind IMP. Arg-165 is a binding site for diphosphate.

Belongs to the purine/pyrimidine phosphoribosyltransferase family. As to quaternary structure, homotetramer. It depends on Mg(2+) as a cofactor.

The protein resides in the cytoplasm. The enzyme catalyses IMP + diphosphate = hypoxanthine + 5-phospho-alpha-D-ribose 1-diphosphate. It catalyses the reaction GMP + diphosphate = guanine + 5-phospho-alpha-D-ribose 1-diphosphate. The protein operates within purine metabolism; IMP biosynthesis via salvage pathway; IMP from hypoxanthine: step 1/1. Its function is as follows. Purine salvage pathway enzyme which catalyzes the transfer of the ribosyl-5-phosphate group from 5-phospho-alpha-D-ribose 1-diphosphate (PRPP) to the N9 position of hypoxanthine to yield IMP (inosine 5'-monophosphate). To a lesser extent, can also act on guanine leading to GMP, but shows a highly less efficient activity with xanthine. This is Hypoxanthine phosphoribosyltransferase (hpt) from Shigella flexneri.